The sequence spans 653 residues: DNA-directed RNA polymerase III subunit RPC-3 (653 aa).

Disordered regions lie at residues 141–186 (INGV…DSDP), 280–309 (DSSAPRKRLKLDGPLEDDVKDEDDGDDFSD), and 422–442 (IKEDEDDEDEEGGPVSMKRRG). Over residues 159–170 (AENHTDHAHDYQ) the composition is skewed to basic and acidic residues. Composition is skewed to acidic residues over residues 293–309 (PLEDDVKDEDDGDDFSD) and 424–433 (EDEDDEDEEG). The tract at residues 580–601 (TYKSMSRCLQRIRVEREKLKFL) is leucine-zipper.

This sequence belongs to the RNA polymerase beta chain family. In terms of assembly, component of the RNA polymerase III (Pol III) complex consisting of 17 subunits.

Its subcellular location is the nucleus. DNA-dependent RNA polymerase catalyzes the transcription of DNA into RNA using the four ribonucleoside triphosphates as substrates. Specific core component of RNA polymerase III which synthesizes small RNAs, such as 5S rRNA and tRNAs. This Coccidioides immitis (strain RS) (Valley fever fungus) protein is DNA-directed RNA polymerase III subunit RPC-3 (RPC-82).